The following is a 788-amino-acid chain: Endonuclease MutS2 (788 aa).

332–339 (GPNTGGKT) is an ATP binding site. In terms of domain architecture, Smr spans 713–788 (VDLRGMDAEE…GTGVTVVELK (76 aa)).

This sequence belongs to the DNA mismatch repair MutS family. MutS2 subfamily. Homodimer. Binds to stalled ribosomes, contacting rRNA.

Functionally, endonuclease that is involved in the suppression of homologous recombination and thus may have a key role in the control of bacterial genetic diversity. Acts as a ribosome collision sensor, splitting the ribosome into its 2 subunits. Detects stalled/collided 70S ribosomes which it binds and splits by an ATP-hydrolysis driven conformational change. Acts upstream of the ribosome quality control system (RQC), a ribosome-associated complex that mediates the extraction of incompletely synthesized nascent chains from stalled ribosomes and their subsequent degradation. Probably generates substrates for RQC. This is Endonuclease MutS2 from Clostridium botulinum (strain Kyoto / Type A2).